The sequence spans 328 residues: Tetraacyldisaccharide 4'-kinase (328 aa).

Thr55–Thr62 serves as a coordination point for ATP.

The protein belongs to the LpxK family.

It carries out the reaction a lipid A disaccharide + ATP = a lipid IVA + ADP + H(+). The protein operates within glycolipid biosynthesis; lipid IV(A) biosynthesis; lipid IV(A) from (3R)-3-hydroxytetradecanoyl-[acyl-carrier-protein] and UDP-N-acetyl-alpha-D-glucosamine: step 6/6. Transfers the gamma-phosphate of ATP to the 4'-position of a tetraacyldisaccharide 1-phosphate intermediate (termed DS-1-P) to form tetraacyldisaccharide 1,4'-bis-phosphate (lipid IVA). The polypeptide is Tetraacyldisaccharide 4'-kinase (Escherichia fergusonii (strain ATCC 35469 / DSM 13698 / CCUG 18766 / IAM 14443 / JCM 21226 / LMG 7866 / NBRC 102419 / NCTC 12128 / CDC 0568-73)).